The following is a 428-amino-acid chain: Glutamate--tRNA ligase 2 (428 aa).

Positions 6–16 (PSPTGDMRTEQ) match the 'HIGH' region motif.

The protein belongs to the class-I aminoacyl-tRNA synthetase family. Glutamate--tRNA ligase type 1 subfamily. As to quaternary structure, monomer.

It localises to the cytoplasm. It carries out the reaction tRNA(Glu) + L-glutamate + ATP = L-glutamyl-tRNA(Glu) + AMP + diphosphate. Catalyzes the attachment of glutamate to tRNA(Glu) in a two-step reaction: glutamate is first activated by ATP to form Glu-AMP and then transferred to the acceptor end of tRNA(Glu). The chain is Glutamate--tRNA ligase 2 from Sulfurovum sp. (strain NBC37-1).